The chain runs to 468 residues: ATP synthase subunit beta 1 (468 aa).

155 to 162 serves as a coordination point for ATP; the sequence is GGAGVGKT.

This sequence belongs to the ATPase alpha/beta chains family. As to quaternary structure, F-type ATPases have 2 components, CF(1) - the catalytic core - and CF(0) - the membrane proton channel. CF(1) has five subunits: alpha(3), beta(3), gamma(1), delta(1), epsilon(1). CF(0) has three main subunits: a(1), b(2) and c(9-12). The alpha and beta chains form an alternating ring which encloses part of the gamma chain. CF(1) is attached to CF(0) by a central stalk formed by the gamma and epsilon chains, while a peripheral stalk is formed by the delta and b chains.

It localises to the cell inner membrane. It carries out the reaction ATP + H2O + 4 H(+)(in) = ADP + phosphate + 5 H(+)(out). Its function is as follows. Produces ATP from ADP in the presence of a proton gradient across the membrane. The catalytic sites are hosted primarily by the beta subunits. The polypeptide is ATP synthase subunit beta 1 (Syntrophotalea carbinolica (strain DSM 2380 / NBRC 103641 / GraBd1) (Pelobacter carbinolicus)).